The primary structure comprises 562 residues: Pyruvate kinase isozyme G, chloroplastic (562 aa).

Residue Arg-121 coordinates substrate. 4 residues coordinate K(+): Asn-123, Ser-125, Asp-156, and Thr-157. 123–126 (NMSH) serves as a coordination point for ATP. Glu-308 contacts Mg(2+). Residues Gly-331, Asp-332, and Thr-364 each coordinate substrate. Asp-332 is a binding site for Mg(2+).

This sequence belongs to the pyruvate kinase family. As to quaternary structure, homotetramer. Mg(2+) serves as cofactor. It depends on K(+) as a cofactor. As to expression, highest levels in leaves. Also found in stems, roots and flowers.

It is found in the plastid. The protein localises to the chloroplast. It carries out the reaction pyruvate + ATP = phosphoenolpyruvate + ADP + H(+). It participates in carbohydrate degradation; glycolysis; pyruvate from D-glyceraldehyde 3-phosphate: step 5/5. This chain is Pyruvate kinase isozyme G, chloroplastic, found in Nicotiana tabacum (Common tobacco).